The chain runs to 609 residues: Phosphoenolpyruvate carboxykinase [GTP] (609 aa).

Residues arginine 81 and 220–222 (YGG) each bind substrate. Lysine 229 and histidine 249 together coordinate Mn(2+). Serine 271 lines the substrate pocket. 272-277 (ACGKTN) lines the GTP pocket. The active site involves cysteine 273. Mn(2+) is bound at residue aspartate 296. Residue 387–389 (NSR) participates in substrate binding. Residues arginine 389, arginine 420, and 515-518 (FGEN) contribute to the GTP site.

The protein belongs to the phosphoenolpyruvate carboxykinase [GTP] family. In terms of assembly, monomer. Requires Mn(2+) as cofactor.

The protein localises to the cytoplasm. It carries out the reaction oxaloacetate + GTP = phosphoenolpyruvate + GDP + CO2. It participates in carbohydrate biosynthesis; gluconeogenesis. Its function is as follows. Catalyzes the conversion of oxaloacetate (OAA) to phosphoenolpyruvate (PEP), the rate-limiting step in the metabolic pathway that produces glucose from lactate and other precursors derived from the citric acid cycle. This is Phosphoenolpyruvate carboxykinase [GTP] from Mycobacterium marinum (strain ATCC BAA-535 / M).